The sequence spans 599 residues: MSDLSHIRNFSIIAHIDHGKSTLADRFIQMCGGLSDREMEAQVLDSMDLERERGITIKAHSVTLHYKAQDGKTYQLNFIDTPGHVDFTYEVSRSLAACEGALLVVDAGQGVEAQSVANCYTAIEQGLEVMPVLNKMDLPQAEPERVKEEIESIIGIDATDAVACSAKSGMGVLEVLERLVTVIPAPEGEIEAPLQALIIDSWFDNYLGVVSLVRVKNGRVKKGDKILVKSTGKVHQVDSVGVFTPKHTETADLKAGEVGFIIAGIKDIHGAPVGDTLTLNNTPDVEVLPGFKRVKPQVYAGLFPVSSDDFEDFRDALQKLTLNDSSLQYEPESSEALGFGFRCGFLGMLHMEIIQERLEREYDLDLITTAPTVVFEIVQKNGEIIYVDNPSKLPDLASIQEMREPICRATILVPKDHLGNVITLCIEKRGVQRDMHFLSGQVQVIYDLPMNEVVLDFFDRLKSTSRGYASLDYSFDRFEPSNLVRLDVLINGEKVDALALIVHRDNAPYKGRQLVEKMKELIPRQMFDVAIQAAIGGQIIARSTVKALRKNVLAKCYGGDVSRKRKLLEKQKAGKKRMKQVGSVEIPQEAFLAVLKVDS.

In terms of domain architecture, tr-type G spans 5–187; the sequence is SHIRNFSIIA…RLVTVIPAPE (183 aa). GTP contacts are provided by residues 17 to 22 and 134 to 137; these read DHGKST and NKMD.

It belongs to the TRAFAC class translation factor GTPase superfamily. Classic translation factor GTPase family. LepA subfamily.

The protein localises to the cell inner membrane. It catalyses the reaction GTP + H2O = GDP + phosphate + H(+). Functionally, required for accurate and efficient protein synthesis under certain stress conditions. May act as a fidelity factor of the translation reaction, by catalyzing a one-codon backward translocation of tRNAs on improperly translocated ribosomes. Back-translocation proceeds from a post-translocation (POST) complex to a pre-translocation (PRE) complex, thus giving elongation factor G a second chance to translocate the tRNAs correctly. Binds to ribosomes in a GTP-dependent manner. This Pseudomonas paraeruginosa (strain DSM 24068 / PA7) (Pseudomonas aeruginosa (strain PA7)) protein is Elongation factor 4.